Consider the following 671-residue polypeptide: Probable boron transporter 6 (671 aa).

Over Met1 to Arg37 the chain is Cytoplasmic. The helical transmembrane segment at Ile38–Glu58 threads the bilayer. Over Gln59–Thr77 the chain is Extracellular. A helical transmembrane segment spans residues Ser78–Ala98. Residues Glu99–Tyr123 are Cytoplasmic-facing. The helical transmembrane segment at Leu124–Phe144 threads the bilayer. At Asn145–Ala157 the chain is on the extracellular side. Residues Gly158–Ile178 traverse the membrane as a helical segment. Topologically, residues Ser179–His195 are cytoplasmic. Residues Phe196–Thr216 traverse the membrane as a helical segment. The Extracellular portion of the chain corresponds to Ala217–Ser235. Residues Phe236–Val256 form a helical membrane-spanning segment. The Cytoplasmic portion of the chain corresponds to Pro257 to Val291. Residues Pro292 to Phe312 traverse the membrane as a helical segment. Over Asp313 to Ser332 the chain is Extracellular. Residues Ala333 to Leu353 form a helical membrane-spanning segment. Residues Pro354–Ser469 are Cytoplasmic-facing. Residues Val470–Leu490 traverse the membrane as a helical segment. Topologically, residues Trp491–Gly557 are extracellular. The chain crosses the membrane as a helical span at residues Met558–Ile578. At Arg579–His671 the chain is on the cytoplasmic side.

It belongs to the anion exchanger (TC 2.A.31.3) family.

It localises to the membrane. Functionally, probable boron transporter. Boron is essential for maintaining the integrity of plants cell walls. The protein is Probable boron transporter 6 (BOR6) of Arabidopsis thaliana (Mouse-ear cress).